We begin with the raw amino-acid sequence, 442 residues long: UDP-N-acetylmuramate--L-alanine ligase (442 aa).

Residue 110-116 (GAHGKTS) coordinates ATP.

It belongs to the MurCDEF family.

The protein localises to the cytoplasm. The catalysed reaction is UDP-N-acetyl-alpha-D-muramate + L-alanine + ATP = UDP-N-acetyl-alpha-D-muramoyl-L-alanine + ADP + phosphate + H(+). Its pathway is cell wall biogenesis; peptidoglycan biosynthesis. In terms of biological role, cell wall formation. The polypeptide is UDP-N-acetylmuramate--L-alanine ligase (Streptococcus thermophilus (strain ATCC BAA-491 / LMD-9)).